Consider the following 393-residue polypeptide: Nuclear speckle splicing regulatory protein 1 homolog (393 aa).

The tract at residues 1–49 (MSAPPKRFGLIVKQKEEPKRAPVRVSSVFGDDDDDEAPATATNTSSASV) is disordered. Residues 39-48 (ATATNTSSAS) show a composition bias toward low complexity. A coiled-coil region spans residues 76 to 166 (NYDEIQAIKN…YREQEAEEAA (91 aa)). Positions 187–350 (LLNDLARDPT…SLKDKLKPKR (164 aa)) are disordered. Over residues 199-209 (KQRKMEKKNVR) the composition is skewed to basic residues. Basic and acidic residues-rich tracts occupy residues 222–236 (EDVK…KSIY), 243–261 (DEKK…EGEL), 317–333 (DHAQ…KSPE), and 341–350 (SLKDKLKPKR).

This sequence belongs to the NSRP1 family.

This Caenorhabditis briggsae protein is Nuclear speckle splicing regulatory protein 1 homolog.